The sequence spans 358 residues: tRNA-specific 2-thiouridylase MnmA (358 aa).

ATP is bound by residues 8–15 and methionine 35; that span reads AMSGGVDS. Positions 95–97 are interaction with target base in tRNA; sequence NPD. Cysteine 100 functions as the Nucleophile in the catalytic mechanism. Cysteine 100 and cysteine 194 are joined by a disulfide. Position 124 (glycine 124) interacts with ATP. The interval 144–146 is interaction with tRNA; it reads KDQ. The active-site Cysteine persulfide intermediate is cysteine 194. The tract at residues 301-302 is interaction with tRNA; it reads RY.

This sequence belongs to the MnmA/TRMU family.

It localises to the cytoplasm. It catalyses the reaction S-sulfanyl-L-cysteinyl-[protein] + uridine(34) in tRNA + AH2 + ATP = 2-thiouridine(34) in tRNA + L-cysteinyl-[protein] + A + AMP + diphosphate + H(+). Functionally, catalyzes the 2-thiolation of uridine at the wobble position (U34) of tRNA, leading to the formation of s(2)U34. This chain is tRNA-specific 2-thiouridylase MnmA, found in Chlamydia trachomatis serovar D (strain ATCC VR-885 / DSM 19411 / UW-3/Cx).